A 396-amino-acid polypeptide reads, in one-letter code: S-adenosylmethionine synthase (396 aa).

His16 is an ATP binding site. Asp18 serves as a coordination point for Mg(2+). K(+) is bound at residue Glu44. L-methionine is bound by residues Glu57 and Gln100. The interval 100 to 110 (QSPDINQGVDR) is flexible loop. ATP-binding positions include 165-167 (DAK), Asp240, 246-247 (RK), Ala263, and Lys267. Asp240 serves as a coordination point for L-methionine. Lys271 contacts L-methionine.

The protein belongs to the AdoMet synthase family. In terms of assembly, homotetramer; dimer of dimers. Requires Mg(2+) as cofactor. K(+) is required as a cofactor.

The protein localises to the cytoplasm. It catalyses the reaction L-methionine + ATP + H2O = S-adenosyl-L-methionine + phosphate + diphosphate. Its pathway is amino-acid biosynthesis; S-adenosyl-L-methionine biosynthesis; S-adenosyl-L-methionine from L-methionine: step 1/1. Its function is as follows. Catalyzes the formation of S-adenosylmethionine (AdoMet) from methionine and ATP. The overall synthetic reaction is composed of two sequential steps, AdoMet formation and the subsequent tripolyphosphate hydrolysis which occurs prior to release of AdoMet from the enzyme. The sequence is that of S-adenosylmethionine synthase from Pseudomonas fluorescens (strain SBW25).